A 343-amino-acid chain; its full sequence is Calcium/calmodulin-dependent protein kinase type 1B (343 aa).

One can recognise a Protein kinase domain in the interval 15–270; the sequence is YEIREKLGSG…CQQALQHLWI (256 aa). ATP-binding positions include 21-29 and Lys-44; that span reads LGSGAFSEV. Asp-136 serves as the catalytic Proton acceptor. The tract at residues 290-311 is calmodulin-binding; it reads KNFARTHWKRAFNATSFLRHIR. The interval 314 to 343 is disordered; sequence GQSPEGEEASRQGMTRHSHPGLGTSQSPKW. Ser-338 carries the phosphoserine modification.

This sequence belongs to the protein kinase superfamily. CAMK Ser/Thr protein kinase family. CaMK subfamily. In terms of processing, isoform 1 and isoform 2 are phosphorylated by CAMKK1. Isoform 1 is expressed in liver, heart, lung, kidney, spleen and testis. Isoform 2 is predominantly expressed in cerebrum and cerebellum.

Its subcellular location is the cytoplasm. The protein resides in the nucleus. It catalyses the reaction L-seryl-[protein] + ATP = O-phospho-L-seryl-[protein] + ADP + H(+). The catalysed reaction is L-threonyl-[protein] + ATP = O-phospho-L-threonyl-[protein] + ADP + H(+). With respect to regulation, activated by Ca(2+)/calmodulin. Must be phosphorylated to be maximally active. Activated by CAMKK1. Functionally, calcium/calmodulin-dependent protein kinase belonging to a proposed calcium-triggered signaling cascade. In vitro, isoform 1 and isoform 2 phosphorylate CREB1, SYN1/synapsin I. Phosphorylates and activates CAMK1. This is Calcium/calmodulin-dependent protein kinase type 1B (Pnck) from Rattus norvegicus (Rat).